Reading from the N-terminus, the 85-residue chain is uncharacterized protein (85 aa).

This is an uncharacterized protein from Treponema pallidum (strain Nichols).